We begin with the raw amino-acid sequence, 107 residues long: Small ribosomal subunit protein uS10 (107 aa).

The protein belongs to the universal ribosomal protein uS10 family. In terms of assembly, part of the 30S ribosomal subunit.

Its function is as follows. Involved in the binding of tRNA to the ribosomes. This Deinococcus deserti (strain DSM 17065 / CIP 109153 / LMG 22923 / VCD115) protein is Small ribosomal subunit protein uS10.